A 427-amino-acid chain; its full sequence is Enolase (427 aa).

Glutamine 163 contacts (2R)-2-phosphoglycerate. Glutamate 205 serves as the catalytic Proton donor. Mg(2+) is bound by residues aspartate 242, glutamate 285, and aspartate 312. (2R)-2-phosphoglycerate is bound by residues lysine 337, arginine 366, serine 367, and lysine 388. The active-site Proton acceptor is lysine 337.

It belongs to the enolase family. Requires Mg(2+) as cofactor.

The protein localises to the cytoplasm. The protein resides in the secreted. It is found in the cell surface. It carries out the reaction (2R)-2-phosphoglycerate = phosphoenolpyruvate + H2O. The protein operates within carbohydrate degradation; glycolysis; pyruvate from D-glyceraldehyde 3-phosphate: step 4/5. Catalyzes the reversible conversion of 2-phosphoglycerate (2-PG) into phosphoenolpyruvate (PEP). It is essential for the degradation of carbohydrates via glycolysis. This is Enolase from Burkholderia thailandensis (strain ATCC 700388 / DSM 13276 / CCUG 48851 / CIP 106301 / E264).